The following is a 154-amino-acid chain: Protein X (154 aa).

Positions 68 to 117 (PCALRFTSARCMETTVNAPRNLPKVLHKRTLGLSTMSTTGIETYFKDCVF) are mitochondrial targeting sequence.

It belongs to the orthohepadnavirus protein X family. As to quaternary structure, may form homodimer. May interact with host CEBPA, CFLAR, CREB1, DDB1, E4F1, HBXIP, HSPD1/HSP60, NFKBIA, POLR2E and SMAD4. Interacts with host SMC5-SMC6 complex and induces its degradation. Interacts with host TRPC4AP; leading to prevent ubiquitination of TRPC4AP. Interacts with host PLSCR1; this interaction promotes ubiquitination and degradation of HBx and impairs HBx-mediated cell proliferation. A fraction may be phosphorylated in insect cells and HepG2 cells, a human hepatoblastoma cell line. Phosphorylated in vitro by host protein kinase C or mitogen-activated protein kinase. N-acetylated in insect cells.

It localises to the host cytoplasm. It is found in the host nucleus. The protein localises to the host mitochondrion. Functionally, multifunctional protein that plays a role in silencing host antiviral defenses and promoting viral transcription. Does not seem to be essential for HBV infection. May be directly involved in development of cirrhosis and liver cancer (hepatocellular carcinoma). Most of cytosolic activities involve modulation of cytosolic calcium. The effect on apoptosis is controversial depending on the cell types in which the studies have been conducted. May induce apoptosis by localizing in mitochondria and causing loss of mitochondrial membrane potential. May also modulate apoptosis by binding host CFLAR, a key regulator of the death-inducing signaling complex (DISC). Promotes viral transcription by using the host E3 ubiquitin ligase DDB1 to target the SMC5-SMC6 complex to proteasomal degradation. This host complex would otherwise bind to viral episomal DNA, and prevents its transcription. Moderately stimulates transcription of many different viral and cellular transcription elements. Promoters and enhancers stimulated by HBx contain DNA binding sites for NF-kappa-B, AP-1, AP-2, c-EBP, ATF/CREB, or the calcium-activated factor NF-AT. The chain is Protein X from Orangutan hepatitis B virus (isolate Somad) (HBVoru).